We begin with the raw amino-acid sequence, 500 residues long: TBC1 domain family member 10A (500 aa).

A compositionally biased stretch (basic and acidic residues) spans 1-10; that stretch reads MAKSSRENGP. The interval 1–45 is disordered; sequence MAKSSRENGPREPAAGGSLSGTRESLAQGPDAATADELSSLGSDS. 3 positions are modified to phosphoserine: Ser-39, Ser-40, and Ser-45. Positions 111–299 constitute a Rab-GAP TBC domain; sequence GIPPSLRGRA…RVWDMFFCEG (189 aa). 2 disordered regions span residues 396–415 and 420–500; these read AEPG…LPPD and SSKA…DTYL. Ser-407 carries the post-translational modification Phosphoserine. A compositionally biased stretch (polar residues) spans 438 to 453; that stretch reads TSAQLDKSPGLSQATV. A Phosphothreonine modification is found at Thr-477. Positions 497–500 are binding to the PDZ domain of EBP50; sequence DTYL.

As to quaternary structure, binds to the first PDZ domain of NHERF1 and NHERF2. Expressed in most tissues, except for skeletal muscle.

It localises to the cell projection. The protein localises to the microvillus. In terms of biological role, GTPase-activating protein (GAP) specific for RAB27A and RAB35. Does not show GAP activity for RAB2A, RAB3A and RAB4A. This chain is TBC1 domain family member 10A (Tbc1d10a), found in Mus musculus (Mouse).